Reading from the N-terminus, the 323-residue chain is UDP-N-acetylenolpyruvoylglucosamine reductase (323 aa).

Positions 52 to 217 (KSGGAADWLF…VSARLQGEPG (166 aa)) constitute an FAD-binding PCMH-type domain. Arg-197 is an active-site residue. Positions 234 to 253 (EQSQPVRTKTGGSTFKNPPG) are disordered. Positions 235-249 (QSQPVRTKTGGSTFK) are enriched in polar residues. Catalysis depends on Ser-246, which acts as the Proton donor. The active site involves Glu-316.

Belongs to the MurB family. FAD serves as cofactor.

It is found in the cytoplasm. It catalyses the reaction UDP-N-acetyl-alpha-D-muramate + NADP(+) = UDP-N-acetyl-3-O-(1-carboxyvinyl)-alpha-D-glucosamine + NADPH + H(+). It functions in the pathway cell wall biogenesis; peptidoglycan biosynthesis. Functionally, cell wall formation. The protein is UDP-N-acetylenolpyruvoylglucosamine reductase of Erythrobacter litoralis (strain HTCC2594).